Reading from the N-terminus, the 85-residue chain is Small ribosomal subunit protein bS18 (85 aa).

This sequence belongs to the bacterial ribosomal protein bS18 family. As to quaternary structure, part of the 30S ribosomal subunit. Forms a tight heterodimer with protein bS6.

Binds as a heterodimer with protein bS6 to the central domain of the 16S rRNA, where it helps stabilize the platform of the 30S subunit. The chain is Small ribosomal subunit protein bS18 from Helicobacter pylori (strain P12).